The following is a 131-amino-acid chain: Small ribosomal subunit protein eS8 (131 aa).

The interval 1–37 (MKLGAFYKGGDLKKPSGGKKRRVRRTKKKALGGGPPQ) is disordered. Residues 16 to 30 (SGGKKRRVRRTKKKA) are compositionally biased toward basic residues.

It belongs to the eukaryotic ribosomal protein eS8 family. Part of the 30S ribosomal subunit.

The polypeptide is Small ribosomal subunit protein eS8 (Pyrobaculum neutrophilum (strain DSM 2338 / JCM 9278 / NBRC 100436 / V24Sta) (Thermoproteus neutrophilus)).